Here is a 118-residue protein sequence, read N- to C-terminus: uncharacterized protein (118 aa).

A helical transmembrane segment spans residues 21-38 (IVYFFFFFGLETFFSIIN).

Its subcellular location is the membrane. This is an uncharacterized protein from Dictyostelium discoideum (Social amoeba).